We begin with the raw amino-acid sequence, 101 residues long: NADH-quinone oxidoreductase subunit K (101 aa).

A run of 3 helical transmembrane segments spans residues 4-24, 30-50, and 61-81; these read LAHYLVLGAVLFAISIVGIFL, IVLLMAIELMLLAVNMNFVAF, and VFVFFILTVAAAESAIGLAIL.

It belongs to the complex I subunit 4L family. NDH-1 is composed of 14 different subunits. Subunits NuoA, H, J, K, L, M, N constitute the membrane sector of the complex.

Its subcellular location is the cell inner membrane. It carries out the reaction a quinone + NADH + 5 H(+)(in) = a quinol + NAD(+) + 4 H(+)(out). In terms of biological role, NDH-1 shuttles electrons from NADH, via FMN and iron-sulfur (Fe-S) centers, to quinones in the respiratory chain. The immediate electron acceptor for the enzyme in this species is believed to be ubiquinone. Couples the redox reaction to proton translocation (for every two electrons transferred, four hydrogen ions are translocated across the cytoplasmic membrane), and thus conserves the redox energy in a proton gradient. The polypeptide is NADH-quinone oxidoreductase subunit K (Ralstonia nicotianae (strain ATCC BAA-1114 / GMI1000) (Ralstonia solanacearum)).